The sequence spans 349 residues: tRNA N6-adenosine threonylcarbamoyltransferase (349 aa).

Fe cation contacts are provided by histidine 116 and histidine 120. Substrate-binding positions include 139–143, aspartate 172, glycine 185, and asparagine 283; that span reads LVSGG. Aspartate 311 is a Fe cation binding site.

The protein belongs to the KAE1 / TsaD family. It depends on Fe(2+) as a cofactor.

It is found in the cytoplasm. The catalysed reaction is L-threonylcarbamoyladenylate + adenosine(37) in tRNA = N(6)-L-threonylcarbamoyladenosine(37) in tRNA + AMP + H(+). Functionally, required for the formation of a threonylcarbamoyl group on adenosine at position 37 (t(6)A37) in tRNAs that read codons beginning with adenine. Is involved in the transfer of the threonylcarbamoyl moiety of threonylcarbamoyl-AMP (TC-AMP) to the N6 group of A37, together with TsaE and TsaB. TsaD likely plays a direct catalytic role in this reaction. The chain is tRNA N6-adenosine threonylcarbamoyltransferase from Colwellia psychrerythraea (strain 34H / ATCC BAA-681) (Vibrio psychroerythus).